The following is a 435-amino-acid chain: MLDLKLLRDRPEEVRQALNKRGAVADLDRILELDGKRRQLETRRVALQAESNSLGKKVGELIRQGADPQGAEVTALRQQGADLKAEIAQLEQRERELEEEMQTLLLTLPNLPLPSVPVGQDETENVEVRRWGDALKPTHPVLPHDEVAEKLGLLEVGRAVKVAQSRFVAMVGAGAALERALIAMMLERHIAAGYTEVIPPFLVNSAALEGTGQLPKFAAESFRCADDDLWLIPTAEVPLTNLYREEVIPAERLPLYFCAYTPCFRREAGSYGRDTKGLIRLHQFQKVELVKVTHPTQSEAEHEKLVQDAEAILQMLELPYRVVELCTGDLGFSAARCFDLEVWFPSQNRYREISSCSNCWDFQARRANLRYKEAGQKGTHFVHTLNGSGLAVGRALAALLENHQQPDGSIRIPQALRPFLSSRFLSEDGALRTAP.

234 to 236 (TAE) contributes to the L-serine binding site. ATP is bound at residue 265–267 (RRE). Residue Glu288 coordinates L-serine. 352–355 (EISS) lines the ATP pocket. Ser388 provides a ligand contact to L-serine.

This sequence belongs to the class-II aminoacyl-tRNA synthetase family. Type-1 seryl-tRNA synthetase subfamily. Homodimer. The tRNA molecule binds across the dimer.

The protein localises to the cytoplasm. The enzyme catalyses tRNA(Ser) + L-serine + ATP = L-seryl-tRNA(Ser) + AMP + diphosphate + H(+). It carries out the reaction tRNA(Sec) + L-serine + ATP = L-seryl-tRNA(Sec) + AMP + diphosphate + H(+). It participates in aminoacyl-tRNA biosynthesis; selenocysteinyl-tRNA(Sec) biosynthesis; L-seryl-tRNA(Sec) from L-serine and tRNA(Sec): step 1/1. Catalyzes the attachment of serine to tRNA(Ser). Is also able to aminoacylate tRNA(Sec) with serine, to form the misacylated tRNA L-seryl-tRNA(Sec), which will be further converted into selenocysteinyl-tRNA(Sec). This is Serine--tRNA ligase from Synechococcus sp. (strain JA-3-3Ab) (Cyanobacteria bacterium Yellowstone A-Prime).